The chain runs to 287 residues: Probable endonuclease 4 (287 aa).

His-69, His-109, Glu-144, Asp-178, His-181, His-215, Asp-228, His-230, and Glu-260 together coordinate Zn(2+).

This sequence belongs to the AP endonuclease 2 family. Requires Zn(2+) as cofactor.

The enzyme catalyses Endonucleolytic cleavage to 5'-phosphooligonucleotide end-products.. Functionally, endonuclease IV plays a role in DNA repair. It cleaves phosphodiester bonds at apurinic or apyrimidinic (AP) sites, generating a 3'-hydroxyl group and a 5'-terminal sugar phosphate. This chain is Probable endonuclease 4, found in Thermotoga petrophila (strain ATCC BAA-488 / DSM 13995 / JCM 10881 / RKU-1).